Consider the following 575-residue polypeptide: V-type ATP synthase alpha chain (575 aa).

238-245 (GPFGAGKT) contributes to the ATP binding site.

It belongs to the ATPase alpha/beta chains family.

The enzyme catalyses ATP + H2O + 4 H(+)(in) = ADP + phosphate + 5 H(+)(out). Functionally, produces ATP from ADP in the presence of a proton gradient across the membrane. The V-type alpha chain is a catalytic subunit. The chain is V-type ATP synthase alpha chain from Borreliella afzelii (strain PKo) (Borrelia afzelii).